A 1959-amino-acid polypeptide reads, in one-letter code: Zinc finger protein hangover (1959 aa).

Residues 79-155 form the ZAD domain; that stretch reads NCCRLCIAPQ…FSSQAKQRQW (77 aa). Zn(2+) is bound by residues C81, C84, C128, and C131. The segment at 178–208 is disordered; sequence GFFDQHLHQQQQHHQHLENELEAEKEKATPT. Positions 192–205 are enriched in basic and acidic residues; the sequence is QHLENELEAEKEKA. S228 bears the Phosphoserine mark. T246 carries the post-translational modification Phosphothreonine. The C2H2-type 1 zinc-finger motif lies at 318–341; the sequence is ASCRACSLQFSTRANARRHERNLH. Residues 447–469 form a C2H2-type 2; degenerate zinc finger; it reads MTCRCCNKYFSTYKNFMAHVRKK. The C2H2-type 3 zinc finger occupies 581-604; that stretch reads YECKLCPKGFRTKHEFRTHVYDKH. A disordered region spans residues 674–762; that stretch reads AVSDNASTTG…ANRDASAPKS (89 aa). A compositionally biased stretch (polar residues) spans 677 to 693; the sequence is DNASTTGSGMARSNSME. S680 is modified (phosphoserine). 2 stretches are compositionally biased toward low complexity: residues 716–727 and 741–759; these read SSSAAPPLTSTP and TSAS…DASA. 2 C2H2-type zinc fingers span residues 770-793 and 801-824; these read QVCP…ESKH and YKCV…INVH. A phosphoserine mark is found at S832, S894, S895, S898, and S899. The C2H2-type 6 zinc finger occupies 908 to 930; it reads KECPICNAVFSNNIGLSNHMRSH. Residues 960-991 form a disordered region; it reads TDSELGVGGTMSESAPATPANVPPAMANQTPQ. C2H2-type zinc fingers lie at residues 1011–1034, 1042–1065, 1078–1101, 1154–1176, and 1184–1207; these read MRCR…LTDH, IKCK…FKVH, FECD…RSVH, YQCK…INSH, and YSCK…YKKH. The span at 1233 to 1253 shows a compositional bias: polar residues; it reads TPTCNRKPITSTGAHQQQDGQ. Positions 1233-1301 are disordered; it reads TPTCNRKPIT…GNGTTVGVAS (69 aa). The segment covering 1255 to 1267 has biased composition (basic residues); sequence HSHHTAKRTIFRH. The segment covering 1271–1283 has biased composition (acidic residues); the sequence is DDDDEEDDDEQQQ. C2H2-type zinc fingers lie at residues 1318–1340 and 1375–1397; these read VACT…IQKH and YACD…RKWH. A compositionally biased stretch (low complexity) spans 1445 to 1467; it reads QQSLNNSCNSSMNHNNNSSSNRS. Residues 1445-1471 form a disordered region; that stretch reads QQSLNNSCNSSMNHNNNSSSNRSKSMK. 2 C2H2-type zinc fingers span residues 1476–1499 and 1552–1574; these read LKCE…YELH and WGCD…INNH. Residues 1627-1865 form a disordered region; sequence AAGATTTDKL…STGERRKKAV (239 aa). Residues 1639-1695 show a composition bias toward acidic residues; sequence PDEEDSDDLDEDSSGDDDDSSGTGDDDDDDDSDDDEDGEGEDEDEEGDGGEGEDEEG. Over residues 1697 to 1715 the composition is skewed to low complexity; that stretch reads QPPAQLLPQQQHKTDLNLN. Composition is skewed to acidic residues over residues 1716–1758 and 1782–1829; these read QDDD…EEPE and SDDE…EDEP. Residues 1833–1851 show a composition bias toward low complexity; sequence STASFSESESSTTTTSNSH. The C2H2-type 16 zinc finger occupies 1873 to 1895; it reads FTCDLCQLCFDSQELLQSHIKSH. A disordered region spans residues 1933 to 1959; sequence PDSKSAVLANNNNSKTSSKTVAAGATN. Residues 1942 to 1952 are compositionally biased toward low complexity; it reads NNNNSKTSSKT.

In terms of tissue distribution, expressed ubiquitously in the nervous system, in neurons not glia.

It localises to the nucleus. Required for normal development of ethanol tolerance. Relies on two distinct molecular pathways: a cellular stress pathway defined by hang, and a parallel pathway requiring octopamine. This chain is Zinc finger protein hangover (hang), found in Drosophila melanogaster (Fruit fly).